Here is a 40-residue protein sequence, read N- to C-terminus: Photosystem II reaction center protein J (40 aa).

Residues 8 to 28 form a helical membrane-spanning segment; it reads IPLWLIGTVAGIPVIGSVGVF.

This sequence belongs to the PsbJ family. PSII is composed of 1 copy each of membrane proteins PsbA, PsbB, PsbC, PsbD, PsbE, PsbF, PsbH, PsbI, PsbJ, PsbK, PsbL, PsbM, PsbT, PsbX, PsbY, PsbZ, Psb30/Ycf12, at least 3 peripheral proteins of the oxygen-evolving complex and a large number of cofactors. It forms dimeric complexes.

It localises to the plastid. The protein resides in the chloroplast thylakoid membrane. Its function is as follows. One of the components of the core complex of photosystem II (PSII). PSII is a light-driven water:plastoquinone oxidoreductase that uses light energy to abstract electrons from H(2)O, generating O(2) and a proton gradient subsequently used for ATP formation. It consists of a core antenna complex that captures photons, and an electron transfer chain that converts photonic excitation into a charge separation. The chain is Photosystem II reaction center protein J from Acorus calamus (Sweet flag).